A 312-amino-acid polypeptide reads, in one-letter code: MSGIDPKRFGKVAVLLGGESAERDVSLNSGRLVLQGLRDAGIDAHPFDPAQRPLAALKDEGFVRAFNALHGGYGENGQIQGALDFYGIRYTGSGVLGSALGLDKFRTKLVWQQTGIPTPPFETVMRGDDYAARAKDIVAKLGMPLFVKPASEGSSVAVEKVKSADALPAALEEAAKHDKIVIVEKSIEGGGEYTACIAADLDLPLIKIVPAGEFYDYHAKYIANDTQYLIPCGLDAAKEAEFKRIARRAFDVLGCTDWGRADFMLDAAGNPYFLEVNTAPGMTDHSLPPKAARAVGISYSELVVKVLSLTLD.

In terms of domain architecture, ATP-grasp spans 108-308 (KLVWQQTGIP…YSELVVKVLS (201 aa)). 138-193 (VAKLGMPLFVKPASEGSSVAVEKVKSADALPAALEEAAKHDKIVIVEKSIEGGGEY) serves as a coordination point for ATP. Positions 262, 275, and 277 each coordinate Mg(2+).

Belongs to the D-alanine--D-alanine ligase family. Mg(2+) is required as a cofactor. It depends on Mn(2+) as a cofactor.

Its subcellular location is the cytoplasm. The enzyme catalyses 2 D-alanine + ATP = D-alanyl-D-alanine + ADP + phosphate + H(+). Its pathway is cell wall biogenesis; peptidoglycan biosynthesis. Its function is as follows. Cell wall formation. The protein is D-alanine--D-alanine ligase of Burkholderia thailandensis (strain ATCC 700388 / DSM 13276 / CCUG 48851 / CIP 106301 / E264).